A 411-amino-acid chain; its full sequence is LL-diaminopimelate aminotransferase (411 aa).

Positions 15 and 42 each coordinate substrate. Pyridoxal 5'-phosphate is bound by residues tyrosine 72, 108 to 109 (SK), tyrosine 132, asparagine 187, tyrosine 218, and 246 to 248 (SFS). Residues lysine 109, tyrosine 132, and asparagine 187 each contribute to the substrate site. At lysine 249 the chain carries N6-(pyridoxal phosphate)lysine. Positions 257 and 292 each coordinate pyridoxal 5'-phosphate. The substrate site is built by asparagine 292 and arginine 388.

It belongs to the class-I pyridoxal-phosphate-dependent aminotransferase family. LL-diaminopimelate aminotransferase subfamily. As to quaternary structure, homodimer. Pyridoxal 5'-phosphate serves as cofactor.

It catalyses the reaction (2S,6S)-2,6-diaminopimelate + 2-oxoglutarate = (S)-2,3,4,5-tetrahydrodipicolinate + L-glutamate + H2O + H(+). The protein operates within amino-acid biosynthesis; L-lysine biosynthesis via DAP pathway; LL-2,6-diaminopimelate from (S)-tetrahydrodipicolinate (aminotransferase route): step 1/1. Functionally, involved in the synthesis of meso-diaminopimelate (m-DAP or DL-DAP), required for both lysine and peptidoglycan biosynthesis. Catalyzes the direct conversion of tetrahydrodipicolinate to LL-diaminopimelate. In Synechococcus elongatus (strain ATCC 33912 / PCC 7942 / FACHB-805) (Anacystis nidulans R2), this protein is LL-diaminopimelate aminotransferase.